Consider the following 250-residue polypeptide: MARRYDQRTTIFSPEGRVYQVEYAMTAIRHAGATVGILAKDGIVLAAEKKTTAKLLDSSTSISEKMFKIDEHVVCAVAGITSDANILINYARLSSQRFFYQYQEPMPVEQLVSQICDTKQGYTQYGGLRPFGVSFLYAGWDRHYGFQLYQSDPSGNFAGWKATSIGGENSQVAQSVLRSNYKPDISLKEALQLALKVLTKTMDRSNINSEKLEFSYFTKQGDNVVYHIFTAAELDAFIKETDLEQETEDN.

Belongs to the peptidase T1A family. The 26S proteasome consists of a 20S proteasome core and two 19S regulatory subunits. The 20S proteasome core is composed of 28 subunits that are arranged in four stacked rings, resulting in a barrel-shaped structure. The two end rings are each formed by seven alpha subunits, and the two central rings are each formed by seven beta subunits. The catalytic chamber with the active sites is on the inside of the barrel.

Its subcellular location is the cytoplasm. The protein resides in the nucleus. The proteasome is a multicatalytic proteinase complex which is characterized by its ability to cleave peptides with Arg, Phe, Tyr, Leu, and Glu adjacent to the leaving group at neutral or slightly basic pH. The proteasome has an ATP-dependent proteolytic activity. The sequence is that of Proteasome subunit alpha type-4 (psmA4) from Dictyostelium discoideum (Social amoeba).